A 204-amino-acid polypeptide reads, in one-letter code: Peptide deformylase (204 aa).

2 residues coordinate Fe cation: Cys-131 and His-174. The active site involves Glu-175. His-178 serves as a coordination point for Fe cation.

Belongs to the polypeptide deformylase family. Fe(2+) serves as cofactor.

The catalysed reaction is N-terminal N-formyl-L-methionyl-[peptide] + H2O = N-terminal L-methionyl-[peptide] + formate. Removes the formyl group from the N-terminal Met of newly synthesized proteins. Requires at least a dipeptide for an efficient rate of reaction. N-terminal L-methionine is a prerequisite for activity but the enzyme has broad specificity at other positions. In Streptococcus mutans serotype c (strain ATCC 700610 / UA159), this protein is Peptide deformylase.